The chain runs to 344 residues: Succinylglutamate desuccinylase (344 aa).

The Zn(2+) site is built by histidine 63, glutamate 66, and histidine 160. The active site involves glutamate 224.

This sequence belongs to the AspA/AstE family. Succinylglutamate desuccinylase subfamily. Zn(2+) is required as a cofactor.

It carries out the reaction N-succinyl-L-glutamate + H2O = L-glutamate + succinate. It participates in amino-acid degradation; L-arginine degradation via AST pathway; L-glutamate and succinate from L-arginine: step 5/5. In terms of biological role, transforms N(2)-succinylglutamate into succinate and glutamate. This is Succinylglutamate desuccinylase from Shewanella baltica (strain OS223).